The chain runs to 251 residues: Protein FAM216A (251 aa).

Residues 1 to 16 are compositionally biased toward polar residues; that stretch reads MPNQGPVSDWTECSSS. The disordered stretch occupies residues 1 to 49; that stretch reads MPNQGPVSDWTECSSSAEPPAVARAEGGGGGSAGHSYYQNSKDRIKDGH.

Belongs to the FAM216 family.

In Bos taurus (Bovine), this protein is Protein FAM216A (FAM216A).